Reading from the N-terminus, the 321-residue chain is HPr kinase/phosphorylase (321 aa).

Active-site residues include His-143 and Lys-164. An ATP-binding site is contributed by 158–165 (GKSGVGKS). Ser-165 is a binding site for Mg(2+). Asp-182 serves as the catalytic Proton acceptor; for phosphorylation activity. Proton donor; for dephosphorylation activity. The interval 206–215 (MEIRGLGILN) is important for the catalytic mechanism of both phosphorylation and dephosphorylation. Glu-207 serves as a coordination point for Mg(2+). Arg-248 is an active-site residue. The tract at residues 269 to 274 (PVRPGR) is important for the catalytic mechanism of dephosphorylation.

This sequence belongs to the HPrK/P family. In terms of assembly, homohexamer. It depends on Mg(2+) as a cofactor.

The enzyme catalyses [HPr protein]-L-serine + ATP = [HPr protein]-O-phospho-L-serine + ADP + H(+). It carries out the reaction [HPr protein]-O-phospho-L-serine + phosphate + H(+) = [HPr protein]-L-serine + diphosphate. Catalyzes the ATP- as well as the pyrophosphate-dependent phosphorylation of a specific serine residue in HPr, a phosphocarrier protein of the phosphoenolpyruvate-dependent sugar phosphotransferase system (PTS). HprK/P also catalyzes the pyrophosphate-producing, inorganic phosphate-dependent dephosphorylation (phosphorolysis) of seryl-phosphorylated HPr (P-Ser-HPr). This is HPr kinase/phosphorylase from Leptospira interrogans serogroup Icterohaemorrhagiae serovar copenhageni (strain Fiocruz L1-130).